The following is a 239-amino-acid chain: MSNKKDVAVKISGGKKIREAREKVKSDTLYNLTNAVERLKSASYVKFDPTLEIVMKLGIDSRHSDQMVRGVVNLPAGTGKTVRVAVICKEEREEEAKSAGADLVGSTNIIDEIKAGKINFDVCIATPDMMVAIGSVARILGPKGLMPNPKLGTVTLDIKNAIKNAKSGQVEYRAEKAGIIHAGLGKLSFSDQDLLKNLNAFIEAVIKAKPAGLKGSYLKAMYLSSTMGASVQIDLTSIA.

Belongs to the universal ribosomal protein uL1 family. In terms of assembly, part of the 50S ribosomal subunit.

In terms of biological role, binds directly to 23S rRNA. The L1 stalk is quite mobile in the ribosome, and is involved in E site tRNA release. Its function is as follows. Protein L1 is also a translational repressor protein, it controls the translation of the L11 operon by binding to its mRNA. The polypeptide is Large ribosomal subunit protein uL1 (Rickettsia africae (strain ESF-5)).